We begin with the raw amino-acid sequence, 207 residues long: Ribosomal RNA small subunit methyltransferase G (207 aa).

Residues Gly-74, Phe-79, 124–125, and Arg-138 each bind S-adenosyl-L-methionine; that span reads VE.

This sequence belongs to the methyltransferase superfamily. RNA methyltransferase RsmG family.

Its subcellular location is the cytoplasm. It catalyses the reaction guanosine(527) in 16S rRNA + S-adenosyl-L-methionine = N(7)-methylguanosine(527) in 16S rRNA + S-adenosyl-L-homocysteine. Specifically methylates the N7 position of guanine in position 527 of 16S rRNA. In Hyphomonas neptunium (strain ATCC 15444), this protein is Ribosomal RNA small subunit methyltransferase G.